The sequence spans 353 residues: Guanine nucleotide-binding protein G(q) subunit alpha (353 aa).

Residues Cys3 and Cys4 are each lipidated (S-palmitoyl cysteine). A G-alpha domain is found at 32-353 (RELKLLLLGT…QLNLKEYNLV (322 aa)). Residues 35–48 (KLLLLGTGESGKST) form a G1 motif region. GTP is bound by residues 40–47 (GTGESGKS), 174–180 (LRVRAPT), 199–203 (DVGGQ), 268–271 (NKKD), and Ala325. Residues Ser47 and Thr180 each coordinate Mg(2+). The G2 motif stretch occupies residues 172–180 (DILRVRAPT). The interval 195–204 (FRMVDVGGQR) is G3 motif. Residues 264 to 271 (ILFLNKKD) form a G4 motif region. The G5 motif stretch occupies residues 323–328 (TCATDT).

Belongs to the G-alpha family. G(q) subfamily. As to quaternary structure, g proteins are composed of 3 units; alpha, beta and gamma. The alpha chain contains the guanine nucleotide binding site.

Its function is as follows. Guanine nucleotide-binding proteins (G proteins) are involved as modulators or transducers in various transmembrane signaling systems. The sequence is that of Guanine nucleotide-binding protein G(q) subunit alpha from Homarus americanus (American lobster).